The chain runs to 141 residues: Photosystem II protein PSBR, chloroplastic (141 aa).

Residues 1-27 (MATMQISAKGLAPLRPRVSSRRVVKPV) constitute a chloroplast transit peptide. Residues threonine 34 and threonine 37 each carry the phosphothreonine modification. Serine 43 carries the phosphoserine modification. A helical transmembrane segment spans residues 114 to 134 (GLIAWAGLVLVLLAVGVNLII).

It belongs to the psbR family.

It localises to the plastid. It is found in the chloroplast thylakoid membrane. Its function is as follows. Associated with the oxygen-evolving complex of photosystem II (PSII). Is required for the stable binding of LHCSR3 to PSII-LHCII supercomplexes and is essential for efficient energy-dependent quenching and the integrity of the PSII-LHCII-LHCSR3 supercomplex under continuous high light. The polypeptide is Photosystem II protein PSBR, chloroplastic (Chlamydomonas reinhardtii (Chlamydomonas smithii)).